A 271-amino-acid chain; its full sequence is NADPH-dependent 7-cyano-7-deazaguanine reductase (271 aa).

81–83 (IES) serves as a coordination point for substrate. An NADPH-binding site is contributed by 83–84 (SK). C177 acts as the Thioimide intermediate in catalysis. The Proton donor role is filled by D184. 216–217 (HE) contributes to the substrate binding site. Residue 245 to 246 (RG) participates in NADPH binding.

Belongs to the GTP cyclohydrolase I family. QueF type 2 subfamily. As to quaternary structure, homodimer.

It is found in the cytoplasm. The enzyme catalyses 7-aminomethyl-7-carbaguanine + 2 NADP(+) = 7-cyano-7-deazaguanine + 2 NADPH + 3 H(+). The protein operates within tRNA modification; tRNA-queuosine biosynthesis. Functionally, catalyzes the NADPH-dependent reduction of 7-cyano-7-deazaguanine (preQ0) to 7-aminomethyl-7-deazaguanine (preQ1). In Xanthomonas campestris pv. campestris (strain B100), this protein is NADPH-dependent 7-cyano-7-deazaguanine reductase.